Reading from the N-terminus, the 234-residue chain is Segregation and condensation protein A (234 aa).

The protein belongs to the ScpA family. In terms of assembly, component of a cohesin-like complex composed of ScpA, ScpB and the Smc homodimer, in which ScpA and ScpB bind to the head domain of Smc. The presence of the three proteins is required for the association of the complex with DNA.

The protein resides in the cytoplasm. In terms of biological role, participates in chromosomal partition during cell division. May act via the formation of a condensin-like complex containing Smc and ScpB that pull DNA away from mid-cell into both cell halves. The protein is Segregation and condensation protein A of Streptococcus pyogenes serotype M5 (strain Manfredo).